The following is a 798-amino-acid chain: Exo-1,4-beta-xylosidase xlnD (798 aa).

A signal peptide spans 1-20 (MPGAASIVAVLAALLPTALG). N-linked (GlcNAc...) asparagine glycans are attached at residues asparagine 23, asparagine 87, asparagine 142, and asparagine 237. The active site involves aspartate 310. N-linked (GlcNAc...) asparagine glycosylation is found at asparagine 326, asparagine 391, asparagine 404, asparagine 443, asparagine 480, asparagine 522, asparagine 618, asparagine 645, asparagine 658, asparagine 685, and asparagine 707.

It belongs to the glycosyl hydrolase 3 family.

The protein localises to the secreted. The enzyme catalyses Hydrolysis of (1-&gt;4)-beta-D-xylans, to remove successive D-xylose residues from the non-reducing termini.. The protein operates within glycan degradation; xylan degradation. Functionally, xylan 1,4-beta-xylosidase involved in the hydrolysis of xylan, a major structural heterogeneous polysaccharide found in plant biomass representing the second most abundant polysaccharide in the biosphere, after cellulose. This Aspergillus oryzae (strain ATCC 42149 / RIB 40) (Yellow koji mold) protein is Exo-1,4-beta-xylosidase xlnD (xlnD).